The primary structure comprises 344 residues: Autophagy-related protein 14 (344 aa).

The tract at residues 3-18 (CPICHHRAHVVYCAHC) is cysteine repeats. Positions 26-156 (LLKLKLDLIL…VSKICESVRD (131 aa)) form a coiled coil.

This sequence belongs to the ATG14 family. Component of the autophagy-specific VPS34 PI3-kinase complex I composed of VPS15, VPS30, VPS34 and ATG14.

The protein localises to the preautophagosomal structure membrane. Its subcellular location is the vacuole membrane. Its function is as follows. Required for cytoplasm to vacuole transport (Cvt) and autophagy as a part of the autophagy-specific VPS34 PI3-kinase complex I. This complex is essential to recruit the ATG8-phosphatidylinositol conjugate and the ATG12-ATG5 conjugate to the pre-autophagosomal structure. ATG14 mediates the specific binding of the VPS34 PI3-kinase complex I to the preautophagosomal structure (PAS). The sequence is that of Autophagy-related protein 14 (ATG14) from Saccharomyces cerevisiae (strain YJM789) (Baker's yeast).